Reading from the N-terminus, the 422-residue chain is Serine hydroxymethyltransferase (422 aa).

Residues leucine 118 and 122-124 (GHL) contribute to the (6S)-5,6,7,8-tetrahydrofolate site. Lysine 227 bears the N6-(pyridoxal phosphate)lysine mark. Residues glutamate 243 and 351 to 353 (SPF) each bind (6S)-5,6,7,8-tetrahydrofolate.

This sequence belongs to the SHMT family. As to quaternary structure, homodimer. It depends on pyridoxal 5'-phosphate as a cofactor.

The protein localises to the cytoplasm. The enzyme catalyses (6R)-5,10-methylene-5,6,7,8-tetrahydrofolate + glycine + H2O = (6S)-5,6,7,8-tetrahydrofolate + L-serine. It participates in one-carbon metabolism; tetrahydrofolate interconversion. It functions in the pathway amino-acid biosynthesis; glycine biosynthesis; glycine from L-serine: step 1/1. Functionally, catalyzes the reversible interconversion of serine and glycine with tetrahydrofolate (THF) serving as the one-carbon carrier. This reaction serves as the major source of one-carbon groups required for the biosynthesis of purines, thymidylate, methionine, and other important biomolecules. Also exhibits THF-independent aldolase activity toward beta-hydroxyamino acids, producing glycine and aldehydes, via a retro-aldol mechanism. This is Serine hydroxymethyltransferase from Kosmotoga olearia (strain ATCC BAA-1733 / DSM 21960 / TBF 19.5.1).